The sequence spans 78 residues: Antitoxin VapB27 (78 aa).

The region spanning 1 to 45 is the SpoVT-AbrB domain; the sequence is MKAVVDAAGRIVVPKPLREALGLQPGSTVEISRYGAGLHLIPTGR.

This sequence belongs to the VapB family. In terms of assembly, interacts with cognate toxin VapC27 and non-cognate toxins MazF6 and VapC40. Interaction with MazF6 and MazF9 partially neutralizes the toxins.

Antitoxin component of a type II toxin-antitoxin (TA) system. Cognate toxin is VapC27. Upon expression in E.coli partially counteracts the ribonuclease activity of non-cognate toxins MazF6 and MazF9. The polypeptide is Antitoxin VapB27 (vapB27) (Mycobacterium tuberculosis (strain ATCC 25618 / H37Rv)).